The sequence spans 568 residues: Poly(A) polymerase (568 aa).

ATP-binding positions include 87-89, 99-102, 100-102, Asp-154, Lys-215, Tyr-224, and 233-234; these read YGS, SDID, DID, and GV. Mg(2+) contacts are provided by Asp-100, Asp-102, and Asp-154. Phosphoserine is present on residues Ser-452 and Ser-550. The interval 525-568 is disordered; it reads NEKRPSKKSKRKNLDARHETVKRSKSDAASGDNINGTTAAVDVN. The span at 536 to 550 shows a compositional bias: basic and acidic residues; sequence KNLDARHETVKRSKS.

Belongs to the poly(A) polymerase family. In terms of assembly, component of the cleavage and polyadenylation factor (CPF) complex, which is composed of PTI1, SYC1, SSU72, GLC7, MPE1, REF2, PFS2, PTA1, YSH1/BRR5, SWD2, CFT2/YDH1, YTH1, CFT1/YHH1, FIP1 and PAP1. Interacts with FIR1 and RRP6. Requires Mg(2+) as cofactor. The cofactor is Mn(2+).

The protein localises to the nucleus. The catalysed reaction is RNA(n) + ATP = RNA(n)-3'-adenine ribonucleotide + diphosphate. Its function is as follows. Polymerase component of the cleavage and polyadenylation factor (CPF) complex, which plays a key role in polyadenylation-dependent pre-mRNA 3'-end formation and cooperates with cleavage factors including the CFIA complex and NAB4/CFIB. The protein is Poly(A) polymerase (PAP1) of Saccharomyces cerevisiae (strain ATCC 204508 / S288c) (Baker's yeast).